The following is a 211-amino-acid chain: Dual specificity protein phosphatase 26 (211 aa).

Residues 60–207 (NHADEVWPGL…LLALDRRLRQ (148 aa)) enclose the Tyrosine-protein phosphatase domain. The active-site Phosphocysteine intermediate is C152.

Belongs to the protein-tyrosine phosphatase family. Non-receptor class dual specificity subfamily. Interacts with HSF4.

The protein resides in the cytoplasm. It is found in the nucleus. The protein localises to the golgi apparatus. It carries out the reaction O-phospho-L-tyrosyl-[protein] + H2O = L-tyrosyl-[protein] + phosphate. It catalyses the reaction O-phospho-L-seryl-[protein] + H2O = L-seryl-[protein] + phosphate. The catalysed reaction is O-phospho-L-threonyl-[protein] + H2O = L-threonyl-[protein] + phosphate. Inactivates MAPK1 and MAPK3 which leads to dephosphorylation of heat shock factor protein 4 and a reduction in its DNA-binding activity. This Bos taurus (Bovine) protein is Dual specificity protein phosphatase 26 (DUSP26).